The sequence spans 365 residues: Putative chalcone synthase (365 aa).

Cysteine 144 is a catalytic residue.

This sequence belongs to the thiolase-like superfamily. Chalcone/stilbene synthases family.

The enzyme catalyses (E)-4-coumaroyl-CoA + 3 malonyl-CoA + 3 H(+) = 2',4,4',6'-tetrahydroxychalcone + 3 CO2 + 4 CoA. This chain is Putative chalcone synthase (bcsA), found in Bacillus subtilis (strain 168).